Here is a 200-residue protein sequence, read N- to C-terminus: Isochorismatase family protein 2A (200 aa).

The protein belongs to the isochorismatase family.

The chain is Isochorismatase family protein 2A from Dictyostelium discoideum (Social amoeba).